The chain runs to 232 residues: Ubiquinone biosynthesis O-methyltransferase (232 aa).

The S-adenosyl-L-methionine site is built by Arg36, Gly55, Asp76, and Leu120.

It belongs to the methyltransferase superfamily. UbiG/COQ3 family.

It carries out the reaction a 3-demethylubiquinol + S-adenosyl-L-methionine = a ubiquinol + S-adenosyl-L-homocysteine + H(+). It catalyses the reaction a 3-(all-trans-polyprenyl)benzene-1,2-diol + S-adenosyl-L-methionine = a 2-methoxy-6-(all-trans-polyprenyl)phenol + S-adenosyl-L-homocysteine + H(+). It functions in the pathway cofactor biosynthesis; ubiquinone biosynthesis. Functionally, O-methyltransferase that catalyzes the 2 O-methylation steps in the ubiquinone biosynthetic pathway. This chain is Ubiquinone biosynthesis O-methyltransferase, found in Pseudomonas fluorescens (strain Pf0-1).